Consider the following 180-residue polypeptide: MGLGRRAMVYLGLAEEDEDYLDDDYDDGRAVGRDDRRAMHEPVPMDRTVRRIDAREEPVAMPRRPPVEPLRPAGPVPMRRVAAVEESHPYRITTLQPRSYNEARQIGEEFRDGTPVIMNLTDMDDADAKRLVDFAAGLIFGLRGDLEKVTNKVFLLSPHNVEVTETDKRRIREGGFYNQS.

A disordered region spans residues 21-40 (LDDDYDDGRAVGRDDRRAMH). Positions 27–40 (DGRAVGRDDRRAMH) are enriched in basic and acidic residues.

This sequence belongs to the SepF family. As to quaternary structure, homodimer. Interacts with FtsZ.

The protein resides in the cytoplasm. In terms of biological role, cell division protein that is part of the divisome complex and is recruited early to the Z-ring. Probably stimulates Z-ring formation, perhaps through the cross-linking of FtsZ protofilaments. Its function overlaps with FtsA. This Frankia casuarinae (strain DSM 45818 / CECT 9043 / HFP020203 / CcI3) protein is Cell division protein SepF.